The following is a 785-amino-acid chain: Pre-tRNA-processing protein PTA1 (785 aa).

Positions 487 to 544 are disordered; that stretch reads INSVPSSSSSKRKSDDDDDGNDNEEVGNDGPTANSKKIKMETEPLAEEPEEPEDDDRM. Residue S500 is modified to Phosphoserine. Acidic residues-rich tracts occupy residues 502–513 and 530–542; these read DDDDGNDNEEVG and PLAE…EDDD.

In terms of assembly, component of the cleavage and polyadenylation factor (CPF) complex, which is composed of PTI1, SYC1, SSU72, GLC7, MPE1, REF2, PFS2, PTA1, YSH1/BRR5, SWD2, CFT2/YDH1, YTH1, CFT1/YHH1, FIP1 and PAP1. Component of the APT complex, which is a subcomplex of CPF, and is composed of PTI1, SYC1, SSU72, GLC7, REF2, PTA1 and SWD2.

It localises to the nucleus. Functionally, essential in pre-tRNA processing. Component of the cleavage and polyadenylation factor (CPF) complex, which plays a key role in polyadenylation-dependent pre-mRNA 3'-end formation and cooperates with cleavage factors including the CFIA complex and NAB4/CFIB. Component of the APT complex, which may be involved in polyadenylation-independent transcript 3'-end formation. The polypeptide is Pre-tRNA-processing protein PTA1 (PTA1) (Saccharomyces cerevisiae (strain ATCC 204508 / S288c) (Baker's yeast)).